The chain runs to 508 residues: Bestrophin-2 (508 aa).

Over 1–31 (MTVTYTARVANARFGGFSQLLLLWRGSIYKL) the chain is Cytoplasmic. Alanine 10 provides a ligand contact to Ca(2+). The helical transmembrane segment at 32–51 (LWRELLCFLGLYMALSAAYR) threads the bilayer. Residues 52-60 (FLLAEEQKR) are Extracellular-facing. A helical transmembrane segment spans residues 61-82 (YFEKLVIYCDQYASLIPVSFVL). The Cytoplasmic portion of the chain corresponds to 83–238 (GFYVTLVVHR…WISIPLVYTQ (156 aa)). Residues 239-255 (VVTIAVYSYFLACLIGR) traverse the membrane as a helical segment. Over 256–274 (QFLDPAQGYKDHTLDLCVP) the chain is Extracellular. A helical membrane pass occupies residues 275–288 (IFTLLQFFFYAGWL). Topologically, residues 289 to 508 (KVAEQLINPF…PIGEEEESPA (220 aa)) are cytoplasmic. Residues glutamine 293, asparagine 296, aspartate 301, and aspartate 304 each coordinate Ca(2+). A disordered region spans residues 455–508 (LREPELEPPACPEPPAPIPGPTPEPFTTVSIPGPRAPAPPWLPSPIGEEEESPA). 2 stretches are compositionally biased toward pro residues: residues 461–478 (EPPACPEPPAPIPGPTPE) and 488–497 (PRAPAPPWLP).

This sequence belongs to the anion channel-forming bestrophin (TC 1.A.46) family. Calcium-sensitive chloride channel subfamily. Pentamer. Interacts with GLUL; this interaction tethers a fraction of GLUL to the membrane, causing a decrease of cytosolic glutamine synthase (GS) activity and inhibits the chloride channel activity of BEST2 by affecting the gating at the aperture in the absence of intracellular glutamate. In terms of tissue distribution, expressed in mucin-secreting colonic goblet cells.

Its subcellular location is the cell membrane. It localises to the basolateral cell membrane. The catalysed reaction is chloride(in) = chloride(out). It carries out the reaction hydrogencarbonate(in) = hydrogencarbonate(out). The enzyme catalyses L-glutamate(out) = L-glutamate(in). It catalyses the reaction iodide(out) = iodide(in). The catalysed reaction is L-glutamine(out) = L-glutamine(in). Its activity is regulated as follows. Chloride channel activity is allosterically inhibited by GLUL/glutamine synthase (GS) which affects the gating at the aperture in the absence of intracellular glutamate. Inhibitory effect of GLUL is relieved upon increasing of intracellular level of L-glutamate. Its function is as follows. Ligand-gated anion channel that allows the movement of anions across cell membranes when activated by calcium (Ca2+). Transports a large specter of anions, namely mediates the movement of chloride, L-glutamate and iodide. Calcium-binding triggers the dilation of the aperture, but calcium-dependent gating is only effective when the size of the passing anion is bigger than the closed aperture. Mediates the calcium-activated hydrogencarbonate movement and participates in colonic hydrogencarbonate secretion concomitant with mucin secretion. In non-pigmented epithelium (NPE), mediates the efflux of intracellular L-glutamate; binding of intracellular L-glutamate activates and open both the neck and the aperture of the channel, leading to L-glutamate exit promoting chloride influx movement from the extracellular side in trans. Also exhibits a directional permeability for intracellular glutamine, in a similar manner as for L-glutamate. In Mus musculus (Mouse), this protein is Bestrophin-2.